The primary structure comprises 563 residues: Arginine--tRNA ligase (563 aa).

The short motif at alanine 134–asparagine 144 is the 'HIGH' region element.

This sequence belongs to the class-I aminoacyl-tRNA synthetase family. In terms of assembly, monomer.

Its subcellular location is the cytoplasm. It carries out the reaction tRNA(Arg) + L-arginine + ATP = L-arginyl-tRNA(Arg) + AMP + diphosphate. In Heliobacterium modesticaldum (strain ATCC 51547 / Ice1), this protein is Arginine--tRNA ligase.